Reading from the N-terminus, the 395-residue chain is uncharacterized protein (395 aa).

Disordered stretches follow at residues 17-155 (EVKK…QVKT) and 276-304 (EERE…HEQK). 2 stretches are compositionally biased toward polar residues: residues 42–71 (DGNN…SNVV) and 81–96 (GDAS…NVVK). The span at 103–133 (VAEKPEKEDLAVIESEDKAAKPDGEIKKNVE) shows a compositional bias: basic and acidic residues. A compositionally biased stretch (low complexity) spans 134-143 (TEVTSRSTSS). Basic and acidic residues-rich tracts occupy residues 144–155 (QEKDELEKQVKT) and 276–290 (EERE…KEQS). A coiled-coil region spans residues 224 to 351 (LKMNGKEDDL…QRRLKELEAM (128 aa)). The segment covering 291–300 (SEGSKTANQT) has biased composition (polar residues).

It is found in the cytoplasm. This is an uncharacterized protein from Schizosaccharomyces pombe (strain 972 / ATCC 24843) (Fission yeast).